A 294-amino-acid chain; its full sequence is Protoheme IX farnesyltransferase 1 (294 aa).

A run of 9 helical transmembrane segments spans residues 8-28 (VTKP…FLLA), 35-55 (PWLM…GCAI), 82-102 (AMAA…LLIA), 107-127 (AAVF…SLYM), 132-152 (VYGT…GYCA), 162-182 (LILL…IAIF), 208-228 (IVLY…SGYT), 229-249 (GAAF…MALR), and 263-283 (QVFA…AVDY).

The protein belongs to the UbiA prenyltransferase family. Protoheme IX farnesyltransferase subfamily.

The protein resides in the cell inner membrane. It carries out the reaction heme b + (2E,6E)-farnesyl diphosphate + H2O = Fe(II)-heme o + diphosphate. It participates in porphyrin-containing compound metabolism; heme O biosynthesis; heme O from protoheme: step 1/1. Its function is as follows. Converts heme B (protoheme IX) to heme O by substitution of the vinyl group on carbon 2 of heme B porphyrin ring with a hydroxyethyl farnesyl side group. This Pseudoalteromonas translucida (strain TAC 125) protein is Protoheme IX farnesyltransferase 1.